A 589-amino-acid polypeptide reads, in one-letter code: 2-succinyl-5-enolpyruvyl-6-hydroxy-3-cyclohexene-1-carboxylate synthase (589 aa).

Residues 198-222 (DAATTEGAHDSHAPSQPTRGPRKLP) are disordered.

The protein belongs to the TPP enzyme family. MenD subfamily. As to quaternary structure, homodimer. It depends on Mg(2+) as a cofactor. Mn(2+) serves as cofactor. The cofactor is thiamine diphosphate.

The enzyme catalyses isochorismate + 2-oxoglutarate + H(+) = 5-enolpyruvoyl-6-hydroxy-2-succinyl-cyclohex-3-ene-1-carboxylate + CO2. Its pathway is quinol/quinone metabolism; 1,4-dihydroxy-2-naphthoate biosynthesis; 1,4-dihydroxy-2-naphthoate from chorismate: step 2/7. It participates in quinol/quinone metabolism; menaquinone biosynthesis. Its function is as follows. Catalyzes the thiamine diphosphate-dependent decarboxylation of 2-oxoglutarate and the subsequent addition of the resulting succinic semialdehyde-thiamine pyrophosphate anion to isochorismate to yield 2-succinyl-5-enolpyruvyl-6-hydroxy-3-cyclohexene-1-carboxylate (SEPHCHC). The sequence is that of 2-succinyl-5-enolpyruvyl-6-hydroxy-3-cyclohexene-1-carboxylate synthase from Corynebacterium jeikeium (strain K411).